We begin with the raw amino-acid sequence, 339 residues long: Biotin synthase (339 aa).

The Radical SAM core domain maps to 55 to 282 (NAVQLSTLLS…KAVVRLSAGR (228 aa)). 3 residues coordinate [4Fe-4S] cluster: C70, C74, and C77. C114, C145, C205, and R277 together coordinate [2Fe-2S] cluster.

It belongs to the radical SAM superfamily. Biotin synthase family. In terms of assembly, homodimer. The cofactor is [4Fe-4S] cluster. Requires [2Fe-2S] cluster as cofactor.

The enzyme catalyses (4R,5S)-dethiobiotin + (sulfur carrier)-SH + 2 reduced [2Fe-2S]-[ferredoxin] + 2 S-adenosyl-L-methionine = (sulfur carrier)-H + biotin + 2 5'-deoxyadenosine + 2 L-methionine + 2 oxidized [2Fe-2S]-[ferredoxin]. The protein operates within cofactor biosynthesis; biotin biosynthesis; biotin from 7,8-diaminononanoate: step 2/2. Its function is as follows. Catalyzes the conversion of dethiobiotin (DTB) to biotin by the insertion of a sulfur atom into dethiobiotin via a radical-based mechanism. In Burkholderia ambifaria (strain ATCC BAA-244 / DSM 16087 / CCUG 44356 / LMG 19182 / AMMD) (Burkholderia cepacia (strain AMMD)), this protein is Biotin synthase.